The sequence spans 93 residues: MSETQNTQVAKRQRTLVGKVVSNKMDKTVVVLVERRVKHPIFGKIIMRSAKYKAHDESNQYNEGDTVEIAEGRPISRSKAWRVVRLVEAARVI.

The protein belongs to the universal ribosomal protein uS17 family. As to quaternary structure, part of the 30S ribosomal subunit.

One of the primary rRNA binding proteins, it binds specifically to the 5'-end of 16S ribosomal RNA. This Bordetella bronchiseptica (strain ATCC BAA-588 / NCTC 13252 / RB50) (Alcaligenes bronchisepticus) protein is Small ribosomal subunit protein uS17.